The chain runs to 219 residues: Beta-crystallin B2 (219 aa).

The residue at position 2 (Ala2) is an N-acetylalanine. Residues 2-16 (ASEHQMPASKQQPAS) form an N-terminal arm region. Beta/gamma crystallin 'Greek key' domains follow at residues 17–56 (PNIA…LVHS) and 57–101 (GPWV…RPIK). The tract at residues 102–120 (VVRAPRQPLPTRQTKDSQE) is connecting peptide. Beta/gamma crystallin 'Greek key' domains lie at 121–162 (HKIV…RVQS) and 163–205 (GTWV…RRIR). The interval 207–219 (MQWHQRGAYHPSN) is C-terminal arm.

It belongs to the beta/gamma-crystallin family. In terms of assembly, homo/heterodimer, or complexes of higher-order. The structure of beta-crystallin oligomers seems to be stabilized through interactions between the N-terminal arms.

Crystallins are the dominant structural components of the vertebrate eye lens. This chain is Beta-crystallin B2 (CRYBB2), found in Gallus gallus (Chicken).